Consider the following 325-residue polypeptide: RNA ligase 1 (325 aa).

Mg(2+) is required as a cofactor. Requires Mn(2+) as cofactor. Post-translationally, AMPylates itself (auto-AMPylation).

The enzyme catalyses ATP + (ribonucleotide)n-3'-hydroxyl + 5'-phospho-(ribonucleotide)m = (ribonucleotide)n+m + AMP + diphosphate.. Functions as an RNA ligase, in vitro. The ligation reaction entails three nucleotidyl transfer steps. In the first step, the RNA ligase reacts with ATP in the absence of nucleic acid to form a covalent ligase-AMP intermediate and release pyrophosphate. In step 2, the ligase-AMP binds to the nucleic acid and transfers the adenylate to the 5'-PO4 terminus to form an adenylylated intermediate. In step 3, the RNA ligase directs the attack of the 3'-OH on the 5'-phosphoanhydride linkage, resulting in a repaired 3'-5' phosphodiester and release of AMP. Exhibits selectivity for single-stranded RNA substrates and may not have nick-sealing activity on double-stranded DNA-RNA hybrids. May play a role in maintaining RNA integrity under stress conditions, for example in response to reactive oxygen species (ROS). The chain is RNA ligase 1 from Rattus norvegicus (Rat).